The chain runs to 89 residues: Small ribosomal subunit protein bS16 (89 aa).

Belongs to the bacterial ribosomal protein bS16 family.

This Anaplasma marginale (strain Florida) protein is Small ribosomal subunit protein bS16.